The sequence spans 274 residues: Urease accessory protein UreD (274 aa).

It belongs to the UreD family. In terms of assembly, ureD, UreF and UreG form a complex that acts as a GTP-hydrolysis-dependent molecular chaperone, activating the urease apoprotein by helping to assemble the nickel containing metallocenter of UreC. The UreE protein probably delivers the nickel.

Its subcellular location is the cytoplasm. Functionally, required for maturation of urease via the functional incorporation of the urease nickel metallocenter. The polypeptide is Urease accessory protein UreD (Lachnoclostridium phytofermentans (strain ATCC 700394 / DSM 18823 / ISDg) (Clostridium phytofermentans)).